Consider the following 413-residue polypeptide: Serine hydroxymethyltransferase (413 aa).

Residues leucine 117 and 121 to 123 (GHL) each bind (6S)-5,6,7,8-tetrahydrofolate. N6-(pyridoxal phosphate)lysine is present on lysine 226. (6S)-5,6,7,8-tetrahydrofolate contacts are provided by residues glutamate 239 and 349–351 (SPF).

The protein belongs to the SHMT family. In terms of assembly, homodimer. Pyridoxal 5'-phosphate serves as cofactor.

It is found in the cytoplasm. It catalyses the reaction (6R)-5,10-methylene-5,6,7,8-tetrahydrofolate + glycine + H2O = (6S)-5,6,7,8-tetrahydrofolate + L-serine. Its pathway is one-carbon metabolism; tetrahydrofolate interconversion. It participates in amino-acid biosynthesis; glycine biosynthesis; glycine from L-serine: step 1/1. Catalyzes the reversible interconversion of serine and glycine with tetrahydrofolate (THF) serving as the one-carbon carrier. This reaction serves as the major source of one-carbon groups required for the biosynthesis of purines, thymidylate, methionine, and other important biomolecules. Also exhibits THF-independent aldolase activity toward beta-hydroxyamino acids, producing glycine and aldehydes, via a retro-aldol mechanism. This is Serine hydroxymethyltransferase from Bacillus cereus (strain ATCC 10987 / NRS 248).